The chain runs to 254 residues: PF03932 family protein CutC (254 aa).

Belongs to the CutC family.

The protein localises to the cytoplasm. This Yersinia pseudotuberculosis serotype I (strain IP32953) protein is PF03932 family protein CutC.